A 149-amino-acid polypeptide reads, in one-letter code: UPF0178 protein Lmo1456 (149 aa).

Belongs to the UPF0178 family.

The sequence is that of UPF0178 protein Lmo1456 from Listeria monocytogenes serovar 1/2a (strain ATCC BAA-679 / EGD-e).